Reading from the N-terminus, the 177-residue chain is ATP synthase subunit delta (177 aa).

It belongs to the ATPase delta chain family. F-type ATPases have 2 components, F(1) - the catalytic core - and F(0) - the membrane proton channel. F(1) has five subunits: alpha(3), beta(3), gamma(1), delta(1), epsilon(1). F(0) has three main subunits: a(1), b(2) and c(10-14). The alpha and beta chains form an alternating ring which encloses part of the gamma chain. F(1) is attached to F(0) by a central stalk formed by the gamma and epsilon chains, while a peripheral stalk is formed by the delta and b chains.

Its subcellular location is the cell inner membrane. In terms of biological role, f(1)F(0) ATP synthase produces ATP from ADP in the presence of a proton or sodium gradient. F-type ATPases consist of two structural domains, F(1) containing the extramembraneous catalytic core and F(0) containing the membrane proton channel, linked together by a central stalk and a peripheral stalk. During catalysis, ATP synthesis in the catalytic domain of F(1) is coupled via a rotary mechanism of the central stalk subunits to proton translocation. Functionally, this protein is part of the stalk that links CF(0) to CF(1). It either transmits conformational changes from CF(0) to CF(1) or is implicated in proton conduction. This Pectobacterium atrosepticum (strain SCRI 1043 / ATCC BAA-672) (Erwinia carotovora subsp. atroseptica) protein is ATP synthase subunit delta.